We begin with the raw amino-acid sequence, 438 residues long: Trigger factor (438 aa).

A PPIase FKBP-type domain is found at 162–247 (GDIVTIDFEG…VKEIKVKELP (86 aa)).

It belongs to the FKBP-type PPIase family. Tig subfamily.

It localises to the cytoplasm. It catalyses the reaction [protein]-peptidylproline (omega=180) = [protein]-peptidylproline (omega=0). Involved in protein export. Acts as a chaperone by maintaining the newly synthesized protein in an open conformation. Functions as a peptidyl-prolyl cis-trans isomerase. The polypeptide is Trigger factor (Caldicellulosiruptor saccharolyticus (strain ATCC 43494 / DSM 8903 / Tp8T 6331)).